The sequence spans 55 residues: Large ribosomal subunit protein bL33 (55 aa).

Belongs to the bacterial ribosomal protein bL33 family.

The protein is Large ribosomal subunit protein bL33 of Cereibacter sphaeroides (strain ATCC 17029 / ATH 2.4.9) (Rhodobacter sphaeroides).